A 543-amino-acid chain; its full sequence is Malate synthase (543 aa).

The Proton acceptor role is filled by arginine 162. Aspartate 449 serves as the catalytic Proton donor.

Belongs to the malate synthase family.

It carries out the reaction glyoxylate + acetyl-CoA + H2O = (S)-malate + CoA + H(+). It participates in carbohydrate metabolism; glyoxylate cycle; (S)-malate from isocitrate: step 2/2. This is Malate synthase (masA) from Dictyostelium discoideum (Social amoeba).